The chain runs to 340 residues: Adenosine deaminase (340 aa).

The Zn(2+) site is built by His15 and His17. Substrate is bound by residues His17, Asp19, and Gly172. A Zn(2+)-binding site is contributed by His199. Glu202 functions as the Proton donor in the catalytic mechanism. Asp279 contacts Zn(2+).

Belongs to the metallo-dependent hydrolases superfamily. Adenosine and AMP deaminases family. Adenosine deaminase subfamily. Requires Zn(2+) as cofactor.

The catalysed reaction is adenosine + H2O + H(+) = inosine + NH4(+). The enzyme catalyses 2'-deoxyadenosine + H2O + H(+) = 2'-deoxyinosine + NH4(+). In terms of biological role, catalyzes the hydrolytic deamination of adenosine and 2-deoxyadenosine. This Streptococcus agalactiae serotype Ia (strain ATCC 27591 / A909 / CDC SS700) protein is Adenosine deaminase.